Consider the following 333-residue polypeptide: CMP-N-acetylneuraminate-beta-galactosamide-alpha-2,3-sialyltransferase 4 (333 aa).

At 1–8 (MVSKSRWK) the chain is on the cytoplasmic side. The chain crosses the membrane as a helical; Signal-anchor for type II membrane protein span at residues 9 to 26 (LLAMLALVLVVMVWYSIS). Topologically, residues 27–333 (REDRYIELFY…MGAIKNLTSF (307 aa)) are lumenal. N-linked (GlcNAc...) asparagine glycosylation is found at Asn-61, Asn-131, Asn-310, and Asn-329. A disulfide bridge connects residues Cys-120 and Cys-273.

This sequence belongs to the glycosyltransferase 29 family. Post-translationally, the soluble form derives from the membrane form by proteolytic processing. In terms of tissue distribution, highly expressed in adult placenta, heart and kidney.

Its subcellular location is the golgi apparatus. It localises to the golgi stack membrane. It is found in the secreted. It carries out the reaction a beta-D-galactosyl-(1-&gt;3)-N-acetyl-beta-D-galactosaminyl derivative + CMP-N-acetyl-beta-neuraminate = an N-acetyl-alpha-neuraminyl-(2-&gt;3)-beta-D-galactosyl-(1-&gt;3)-N-acetyl-beta-D-galactosaminyl derivative + CMP + H(+). The catalysed reaction is a beta-D-galactosyl-(1-&gt;3)-N-acetyl-alpha-D-galactosaminyl derivative + CMP-N-acetyl-beta-neuraminate = an N-acetyl-alpha-neuraminyl-(2-&gt;3)-beta-D-galactosyl-(1-&gt;3)-N-acetyl-alpha-D-galactosaminyl derivative + CMP + H(+). The enzyme catalyses a beta-D-galactosyl-(1-&gt;4)-N-acetyl-beta-D-glucosaminyl derivative + CMP-N-acetyl-beta-neuraminate = an N-acetyl-alpha-neuraminyl-(2-&gt;3)-beta-D-galactosyl-(1-&gt;4)-N-acetyl-beta-D-glucosaminyl derivative + CMP + H(+). It catalyses the reaction a ganglioside GM1 (d18:1(4E)) + CMP-N-acetyl-beta-neuraminate = a ganglioside GD1a (d18:1(4E)) + CMP + H(+). It carries out the reaction a ganglioside GA1 (d18:1(4E)) + CMP-N-acetyl-beta-neuraminate = a ganglioside GM1b (d18:1(4E)) + CMP + H(+). The catalysed reaction is a ganglioside GT1c (d18:1(4E)) + CMP-N-acetyl-beta-neuraminate = a ganglioside GQ1c (d18:1(4E)) + CMP + H(+). The enzyme catalyses a neolactoside nLc4Cer + CMP-N-acetyl-beta-neuraminate = a neolactoside IV(3)-alpha-NeuAc-nLc4Cer + CMP + H(+). It catalyses the reaction a neolactoside nLc4Cer(d18:1(4E)) + CMP-N-acetyl-beta-neuraminate = a neolactoside IV(3)-alpha-NeuAc-nLc4Cer(d18:1(4E)) + CMP + H(+). The protein operates within protein modification; protein glycosylation. It participates in glycolipid biosynthesis. Its function is as follows. A beta-galactoside alpha2-3 sialyltransferase involved in terminal sialylation of glycoproteins and glycolipids. Catalyzes the transfer of sialic acid (N-acetyl-neuraminic acid; Neu5Ac) from the nucleotide sugar donor CMP-Neu5Ac onto acceptor Galbeta-(1-&gt;3)-GalNAc- and Galbeta-(1-&gt;4)-GlcNAc-terminated glycoconjugates through an alpha2-3 linkage. Plays a major role in hemostasis. Responsible for sialylation of plasma VWF/von Willebrand factor, preventing its recognition by asialoglycoprotein receptors (ASGPR) and subsequent clearance. Regulates ASGPR-mediated clearance of platelets. Participates in the biosynthesis of the sialyl Lewis X epitopes, both on O- and N-glycans, which are recognized by SELE/E-selectin, SELP/P-selectin and SELL/L-selectin. Essential for selectin-mediated rolling and adhesion of leukocytes during extravasation. Contributes to adhesion and transendothelial migration of neutrophils likely through terminal sialylation of CXCR2. In glycosphingolipid biosynthesis, sialylates GM1 and GA1 gangliosides to form GD1a and GM1b, respectively. Metabolizes brain c-series ganglioside GT1c forming GQ1c. Synthesizes ganglioside LM1 (IV3Neu5Ac-nLc4Cer), a major structural component of peripheral nerve myelin. The polypeptide is CMP-N-acetylneuraminate-beta-galactosamide-alpha-2,3-sialyltransferase 4 (ST3GAL4) (Homo sapiens (Human)).